Here is a 314-residue protein sequence, read N- to C-terminus: Homoserine O-succinyltransferase (314 aa).

The Acyl-thioester intermediate role is filled by Cys-142. Substrate-binding residues include Lys-163 and Ser-192. The active-site Proton acceptor is the His-235. Residue Glu-237 is part of the active site. Arg-249 is a binding site for substrate.

The protein belongs to the MetA family.

The protein resides in the cytoplasm. The catalysed reaction is L-homoserine + succinyl-CoA = O-succinyl-L-homoserine + CoA. It functions in the pathway amino-acid biosynthesis; L-methionine biosynthesis via de novo pathway; O-succinyl-L-homoserine from L-homoserine: step 1/1. In terms of biological role, transfers a succinyl group from succinyl-CoA to L-homoserine, forming succinyl-L-homoserine. The chain is Homoserine O-succinyltransferase from Shewanella frigidimarina (strain NCIMB 400).